A 363-amino-acid polypeptide reads, in one-letter code: Wortmanamides biosynthesis cluster protein C (363 aa).

Transmembrane regions (helical) follow at residues 15-35 (FVTLLIFTPLGIVVTALRFVA), 48-68 (WLAVIATIFFILTNLAGLMAI), 95-115 (IAGLFFYFAQTLSVKLSILAF), 129-149 (ICIYLLAAAQTILFIAFCIFQ), 175-195 (ILGGELPNSLVDFAMVILAMI), 210-230 (VTVLFGLGFVVGIIGFVKIAV), and 237-257 (LYAFSMIALWTGVQMFTALLC). Positions 293–312 (SSSKNSRKHGPYDSDQSPGP) are disordered. N-linked (GlcNAc...) asparagine glycosylation is present at Asn321. The tract at residues 344–363 (SPITHPQAYSKQTTRQFDVV) is disordered.

It belongs to the SAT4 family.

The protein resides in the membrane. It functions in the pathway secondary metabolite biosynthesis. Part of the gene cluster that mediates the biosynthesis of wortmanamides A and B, reduced long-chain polyketides amidated with a specific omega-amino acid, 5-aminopentanoic acid (5PA). The PKS modules of TwmB are involved in the synthesis of the polyketide backbone, whereas the non-canonical C domain of TwmB is a bonafide condensation domain that specifically selects 5PA and catalyzes amidation to release polyketide chain. The C domain clearly prefers C16 and C18 fatty acyl substrates, which is consistent with simultaneous formation of both octaketide and nonaketide acyl amides wortmanamides A and B. Because TwmB lacks a designated enoylreductase (ER) domain, the required activity is provided the enoyl reductase TwmE. The roles of the remaining enzymes have still to be clarified. The chain is Wortmanamides biosynthesis cluster protein C from Talaromyces wortmannii (Penicillium wortmannii).